A 153-amino-acid polypeptide reads, in one-letter code: Large ribosomal subunit protein uL30 (153 aa).

The protein belongs to the universal ribosomal protein uL30 family. Part of the 50S ribosomal subunit.

The sequence is that of Large ribosomal subunit protein uL30 from Methanosarcina barkeri (strain Fusaro / DSM 804).